Reading from the N-terminus, the 83-residue chain is MAARTVAVAAALAVLLIFAASSATVAMAGRPTPTTSLDEEAAQAAAQSEIGGGCKEGEGEEECLARRTLTAHTDYIYTQQHHN.

A signal peptide spans 1-28; it reads MAARTVAVAAALAVLLIFAASSATVAMA. Residues 29-74 constitute a propeptide that is removed on maturation; it reads GRPTPTTSLDEEAAQAAAQSEIGGGCKEGEGEEECLARRTLTAHTD. Sulfotyrosine is present on residues Tyr75 and Tyr77. A propeptide spanning residues 80 to 83 is cleaved from the precursor; the sequence is QHHN.

Belongs to the phytosulfokine family. Sulfation is important for activity and for the binding to a putative membrane receptor. In terms of processing, PSK-alpha is produced by endopeptidase digestion. PSK-beta is produced from PSK-alpha by exopeptidase digestion.

The protein localises to the secreted. Promotes plant cell differentiation, organogenesis and somatic embryogenesis as well as cell proliferation. The polypeptide is Phytosulfokines 4 (PSK4) (Oryza sativa subsp. japonica (Rice)).